The primary structure comprises 336 residues: Homeobox-leucine zipper protein HAT14 (336 aa).

Disordered stretches follow at residues 53–141 and 160–194; these read RSLS…PDSV and SNKR…KLRL. The span at 64–81 shows a compositional bias: basic and acidic residues; that stretch reads EDEKKKPAPRAKKSDEFR. Acidic residues predominate over residues 120–129; sequence VEEEEEEEEA. The segment covering 130–141 has biased composition (low complexity); sequence VPSMSVSPPDSV. Over residues 160–173 the composition is skewed to basic and acidic residues; the sequence is SNKRDIDDEVERSA. The homeobox DNA-binding region spans 187–246; that stretch reads STRKKLRLSKDQSAFLEDSFKEHSTLNPKQKIALAKQLNLRPRQVEVWFQNRRARTKLKQ. Residues 254 to 275 form a leucine-zipper region; sequence LKRCCESLTEENRRLQKEVKEL.

Belongs to the HD-ZIP homeobox family. Class II subfamily.

The protein resides in the nucleus. Functionally, probable transcription factor. In Arabidopsis thaliana (Mouse-ear cress), this protein is Homeobox-leucine zipper protein HAT14 (HAT14).